The chain runs to 809 residues: Cell division control protein 48 homolog A (809 aa).

Position 2 is an N-acetylserine (S2). S41 carries the post-translational modification Phosphoserine. Residues G210, G248–L256, and H387 contribute to the ADP site. G521–L529 is an ATP binding site. A disordered region spans residues A782–N809. Over residues A791–A801 the composition is skewed to low complexity.

The protein belongs to the AAA ATPase family. In terms of assembly, homohexamer. Interacts with SERK1, GRF6, KAPP and SYP31, but not with KNOLLE. Component of the SERK1 signaling complex, composed of KAPP, CDC48A, GRF6 or GRF7, SERK1, SERK2, SERK3/BAK1 and BRI1. Interacts with PUX1, PUX2, PUX3, PUX4, PUX5, PUX7 and PUX11 via its N-terminus. In terms of processing, phosphorylated on at least one threonine residue and on Ser-41 by SERK1.

It localises to the nucleus. The protein resides in the cytoplasm. It is found in the cytoskeleton. Its subcellular location is the phragmoplast. The protein localises to the cell membrane. Functionally, probably functions in cell division and growth processes. Interacts with certain SNAREs as part of specialized membrane fusion events where vesicles from the same organelle fuse (homotypic fusion). The chain is Cell division control protein 48 homolog A (CDC48A) from Arabidopsis thaliana (Mouse-ear cress).